The following is a 259-amino-acid chain: uncharacterized protein (259 aa).

Residues 158–187 adopt a coiled-coil conformation; sequence VELHLKIIEEDMKETTKKNKEKKQNSQSQE. Positions 172 to 181 are enriched in basic and acidic residues; sequence TTKKNKEKKQ. 2 disordered regions span residues 172-197 and 217-240; these read TTKK…MEVS and PVKK…QLSK. Composition is skewed to low complexity over residues 182 to 193 and 217 to 226; these read NSQSQEISNSIE and PVKKTSSASK.

This is an uncharacterized protein from Acanthamoeba polyphaga mimivirus (APMV).